Consider the following 1904-residue polypeptide: Callose synthase 10 (1904 aa).

The HAT 1 repeat unit spans residues 100–132; it reads VIKQKLAKRDGASIDRDRDIERLWEFYKLYKRR. 6 helical membrane passes run 491-511, 532-552, 562-582, 594-614, 661-681, and 722-742; these read SFIR…IIAF, AIMN…AYSM, VIRF…YVKV, FFFH…LIFG, YVAF…FLQI, and VLAI…AIIG. Residues 678 to 701 form an LRR 1 repeat; that stretch reads FLQIKPLVKPTNTIIHLPPFQYSW. LRR repeat units follow at residues 751–774 and 925–948; these read LGEI…FAQN and TLNL…LIRN. One copy of the HAT 2 repeat lies at 1074–1107; it reads YSSSELRSENEDGISILFYLQKIFPDEWENFLER. An LRR 4 repeat occupies 1159-1181; sequence FLERRGLGVDDASLTNMPRGFES. The next 9 membrane-spanning stretches (helical) occupy residues 1474-1494, 1529-1549, 1554-1574, 1621-1641, 1644-1664, 1747-1767, 1783-1803, 1811-1831, and 1853-1873; these read FTTV…YVFL, FLVQ…ILEL, AIFS…TFSL, AFEV…DGGA, FVLL…APYI, LALY…FKLF, FLQG…IAMT, FACV…AITW, and AAMG…PFIS. An HAT 3 repeat occupies 1659 to 1691; it reads LFAPYIFNPSGFEWQKTVEDFEDWVSWLMYKGG.

It belongs to the glycosyltransferase 48 family.

Its subcellular location is the cell membrane. The catalysed reaction is [(1-&gt;3)-beta-D-glucosyl](n) + UDP-alpha-D-glucose = [(1-&gt;3)-beta-D-glucosyl](n+1) + UDP + H(+). Involved in sporophytic and gametophytic development. Required for normal plant development and for the proper accumulation of callose at cell plates, cll walls and plasmodesmata. During pollen formation, required for the entry of microspores into mitosis. During plant growth and development, callose is found as a transitory component of the cell plate in dividing cells, is a major component of pollen mother cell walls and pollen tubes, and is found as a structural component of plasmodesmatal canals. Required for proper cell division and tissue patterning throughout plant organs, including stomatal patterning. The chain is Callose synthase 10 (CALS10) from Arabidopsis thaliana (Mouse-ear cress).